We begin with the raw amino-acid sequence, 134 residues long: MIYMLDTNIIIYLMKNRPKIIAERVSQLLPNDRLVMSFITYAELIKGAFGSQNYEQSIRAIELLTERVNVLYPNEQICLHYGKWANTLKKQGRPIGNNDLWFACHALSLNAVLITHNVKEFQRITDLQWQDWTK.

Residues 3 to 132 (YMLDTNIIIY…RITDLQWQDW (130 aa)) form the PINc domain. Mg(2+)-binding residues include D6 and D99.

It belongs to the PINc/VapC protein family. It depends on Mg(2+) as a cofactor.

In terms of biological role, toxic component of a type II toxin-antitoxin (TA) system. Acts as an RNase, its toxic effect is neutralized by VapB1 antitoxin. The sequence is that of Ribonuclease VapC1 from Haemophilus influenzae (strain ATCC 51907 / DSM 11121 / KW20 / Rd).